The primary structure comprises 908 residues: Autophagy-related protein 9 (908 aa).

The Cytoplasmic portion of the chain corresponds to 1–216 (MADGVIARLM…SGMWCIVVER (216 aa)). Positions 64-162 (SRATVDGRIP…IDQELQPPLH (99 aa)) are disordered. A helical membrane pass occupies residues 217-237 (VLHLIKVAFVAFLLTFLSQCV). Residues 238-259 (DFKKIPSNQKLSQVLVPQCTRN) are Lumenal-facing. N259 carries an N-linked (GlcNAc...) asparagine glycan. A helical membrane pass occupies residues 260–280 (MSGLWNIGLWLFAFYFMWKSI). Over 281–433 (QYILDLRRLT…GILSAKLRSR (153 aa)) the chain is Cytoplasmic. The stretch at 434–454 (FIFAGVMILILSPFVAGYLII) is an intramembrane region. Topologically, residues 455-525 (VYFLEYYNEI…KTSMVAKTVS (71 aa)) are cytoplasmic. A helical membrane pass occupies residues 526–546 (FIAGSIATVLALISVFDPEMF). The Lumenal portion of the chain corresponds to 547–555 (LGFEITHDR). A helical membrane pass occupies residues 556–576 (TVLFYTAVFGAIWSVARGSVS). The Cytoplasmic portion of the chain corresponds to 577–622 (EDNAVFDPEYALGNVVEYTHYQPEHWKDRWHSADVKAEFEELYKLK). An intramembrane segment occupies 623–643 (LVIFIEEILSILTTPFVLFFS). Residues 644 to 908 (LPKSADQIID…HLNRRLGGVR (265 aa)) are Cytoplasmic-facing. Disordered stretches follow at residues 751-779 (AASRMGRSQRGRSKGPLPSRTPRPGAVMA) and 809-878 (QFRG…DSVV). The segment covering 813–825 (GNQGDGHMMGGGS) has biased composition (gly residues). Residues 839-852 (QTHDDESEDSRAGL) are compositionally biased toward basic and acidic residues.

Belongs to the ATG9 family. In terms of assembly, homotrimer; forms a homotrimer with a central pore that forms a path between the two membrane leaflets. Post-translationally, phosphorylated by apg-1. Apg-1 phosphorylation is required for preautophagosome elongation.

It is found in the preautophagosomal structure membrane. Its subcellular location is the cytoplasmic vesicle membrane. The protein resides in the golgi apparatus membrane. The protein localises to the endoplasmic reticulum membrane. The catalysed reaction is a 1,2-diacyl-sn-glycero-3-phosphocholine(in) = a 1,2-diacyl-sn-glycero-3-phosphocholine(out). The enzyme catalyses a 1,2-diacyl-sn-glycero-3-phospho-L-serine(in) = a 1,2-diacyl-sn-glycero-3-phospho-L-serine(out). It catalyses the reaction a 1,2-diacyl-sn-glycero-3-phosphoethanolamine(in) = a 1,2-diacyl-sn-glycero-3-phosphoethanolamine(out). It carries out the reaction a 1,2-diacyl-sn-glycero-3-phospho-(1D-myo-inositol-3-phosphate)(in) = a 1,2-diacyl-sn-glycero-3-phospho-(1D-myo-inositol-3-phosphate)(out). In terms of biological role, phospholipid scramblase involved in autophagy and cytoplasm to vacuole transport (Cvt) vesicle formation. Cycles between the preautophagosomal structure/phagophore assembly site (PAS) and the cytoplasmic vesicle pool and supplies membrane for the growing autophagosome. Lipid scramblase activity plays a key role in preautophagosomal structure/phagophore assembly by distributing the phospholipids that arrive through atg-2 from the cytoplasmic to the luminal leaflet of the bilayer, thereby driving autophagosomal membrane expansion. Required for mitophagy. Also involved in endoplasmic reticulum-specific autophagic process and is essential for the survival of cells subjected to severe ER stress. Different machineries are required for anterograde trafficking to the PAS during either the Cvt pathway or bulk autophagy and for retrograde trafficking. The polypeptide is Autophagy-related protein 9 (apg-7) (Neurospora crassa (strain ATCC 24698 / 74-OR23-1A / CBS 708.71 / DSM 1257 / FGSC 987)).